The sequence spans 94 residues: Co-chaperonin GroES (94 aa).

This sequence belongs to the GroES chaperonin family. Heptamer of 7 subunits arranged in a ring. Interacts with the chaperonin GroEL.

Its subcellular location is the cytoplasm. Together with the chaperonin GroEL, plays an essential role in assisting protein folding. The GroEL-GroES system forms a nano-cage that allows encapsulation of the non-native substrate proteins and provides a physical environment optimized to promote and accelerate protein folding. GroES binds to the apical surface of the GroEL ring, thereby capping the opening of the GroEL channel. The polypeptide is Co-chaperonin GroES (Staphylococcus epidermidis).